The following is a 345-amino-acid chain: S-adenosylmethionine:tRNA ribosyltransferase-isomerase (345 aa).

This sequence belongs to the QueA family. Monomer.

Its subcellular location is the cytoplasm. The enzyme catalyses 7-aminomethyl-7-carbaguanosine(34) in tRNA + S-adenosyl-L-methionine = epoxyqueuosine(34) in tRNA + adenine + L-methionine + 2 H(+). It functions in the pathway tRNA modification; tRNA-queuosine biosynthesis. Functionally, transfers and isomerizes the ribose moiety from AdoMet to the 7-aminomethyl group of 7-deazaguanine (preQ1-tRNA) to give epoxyqueuosine (oQ-tRNA). The protein is S-adenosylmethionine:tRNA ribosyltransferase-isomerase of Acinetobacter baumannii (strain ATCC 17978 / DSM 105126 / CIP 53.77 / LMG 1025 / NCDC KC755 / 5377).